The chain runs to 221 residues: Deoxyribose-phosphate aldolase (221 aa).

The active-site Proton donor/acceptor is Asp-91. Catalysis depends on Lys-153, which acts as the Schiff-base intermediate with acetaldehyde. Catalysis depends on Lys-182, which acts as the Proton donor/acceptor.

The protein belongs to the DeoC/FbaB aldolase family. DeoC type 1 subfamily.

It is found in the cytoplasm. It carries out the reaction 2-deoxy-D-ribose 5-phosphate = D-glyceraldehyde 3-phosphate + acetaldehyde. Its pathway is carbohydrate degradation; 2-deoxy-D-ribose 1-phosphate degradation; D-glyceraldehyde 3-phosphate and acetaldehyde from 2-deoxy-alpha-D-ribose 1-phosphate: step 2/2. Functionally, catalyzes a reversible aldol reaction between acetaldehyde and D-glyceraldehyde 3-phosphate to generate 2-deoxy-D-ribose 5-phosphate. This is Deoxyribose-phosphate aldolase from Clostridium botulinum (strain Alaska E43 / Type E3).